A 532-amino-acid chain; its full sequence is Neutral amino acid transporter A (532 aa).

N-acetylmethionine is present on Met1. Residues 1–10 show a composition bias toward polar residues; it reads MEKSNETNGY. The tract at residues 1-25 is disordered; the sequence is MEKSNETNGYLDSAQAGPAAGPGAP. The Cytoplasmic segment spans residues 1–41; it reads MEKSNETNGYLDSAQAGPAAGPGAPGTAAGRARRCAGFLRR. Low complexity predominate over residues 14–25; the sequence is AQAGPAAGPGAP. 3 helical membrane-spanning segments follow: residues 42 to 62, 88 to 108, and 119 to 139; these read QALVLLTVSGVLAGAGLGAAL, MIILPLVVCSLVSGAASLDAS, and AYFGLTTLSASALAVALAFII. Residues 140 to 216 are Extracellular-facing; the sequence is KPGSGAQTLQ…VTHEKIPIGT (77 aa). 2 N-linked (GlcNAc...) asparagine glycosylation sites follow: Asn201 and Asn206. Transmembrane regions (helical) follow at residues 217–237, 257–277, 298–318, 328–348, 373–393, and 418–438; these read EIEGMNILGLVLFALVLGVAL, ATMVLVSWIMWYVPVGIMFLV, IFASILGHVIHGGIVLPLIYF, FLLGLLAPFATAFATCSSSAT, IGATVNMDGAAIFQCVAAVFI, and VGAAGVPAGGVLTIAIILEAI. Positions 500–532 are disordered; that stretch reads CKSEEETSPLVTHQNPAGPVASAPELESKESVL. Residues Ser507, Ser527, and Ser530 each carry the phosphoserine modification.

Belongs to the dicarboxylate/amino acid:cation symporter (DAACS) (TC 2.A.23) family. SLC1A4 subfamily. As to expression, expressed mostly in brain, muscle, and pancreas but detected in all tissues examined.

Its subcellular location is the membrane. It is found in the melanosome. It carries out the reaction L-threonine(in) + Na(+)(in) = L-threonine(out) + Na(+)(out). It catalyses the reaction L-serine(in) + Na(+)(in) = L-serine(out) + Na(+)(out). The enzyme catalyses L-cysteine(in) + Na(+)(in) = L-cysteine(out) + Na(+)(out). The catalysed reaction is L-alanine(in) + Na(+)(in) = L-alanine(out) + Na(+)(out). It carries out the reaction L-proline(in) + Na(+)(in) = L-proline(out) + Na(+)(out). It catalyses the reaction 4-hydroxy-L-proline(in) + Na(+)(in) = 4-hydroxy-L-proline(out) + Na(+)(out). Its function is as follows. Sodium-dependent neutral amino-acid transporter that mediates transport of alanine, serine, cysteine, proline, hydroxyproline and threonine. This is Neutral amino acid transporter A from Homo sapiens (Human).